Reading from the N-terminus, the 1046-residue chain is Probable inorganic carbon transporter subunit DabA1 (1046 aa).

Zn(2+) is bound by residues Cys462, Asp464, His721, and Cys736.

The protein belongs to the inorganic carbon transporter (TC 9.A.2) DabA family. As to quaternary structure, forms a complex with DabB1. It depends on Zn(2+) as a cofactor.

It localises to the cell inner membrane. In terms of biological role, part of an energy-coupled inorganic carbon pump. The sequence is that of Probable inorganic carbon transporter subunit DabA1 from Halothiobacillus neapolitanus (strain ATCC 23641 / c2) (Thiobacillus neapolitanus).